The chain runs to 195 residues: Morphogenetic protein (195 aa).

In terms of biological role, assembly factor active in membrane morphogenesis. The chain is Morphogenetic protein (P12) from Pseudomonas phage phi6 (Bacteriophage phi-6).